Here is an 88-residue protein sequence, read N- to C-terminus: MANTTSAKKATRKIARRTAVNKSRRTQMRGAVRNVEEAIKTGDRAAAVKALANAEPALMRAAQRNIIHKNNASRKVSRLTAQIAKLAK.

This sequence belongs to the bacterial ribosomal protein bS20 family.

In terms of biological role, binds directly to 16S ribosomal RNA. This chain is Small ribosomal subunit protein bS20, found in Bradyrhizobium diazoefficiens (strain JCM 10833 / BCRC 13528 / IAM 13628 / NBRC 14792 / USDA 110).